The following is a 666-amino-acid chain: Probable potassium transport system protein Kup (666 aa).

Transmembrane regions (helical) follow at residues 16–36 (GFII…LYTM), 58–78 (ISLI…LIAL), 100–120 (PWLI…GALT), 141–161 (IYQN…VLFG), 165–185 (FGTG…FSFL), 221–241 (IFIL…YSDL), 253–273 (WPFV…WILA), 292–312 (LTVY…QALI), 343–363 (LYIP…VLYF), 373–393 (YGLA…YYLI), 399–419 (PFLA…FFWA), and 424–444 (FMHG…VMFI).

Belongs to the HAK/KUP transporter (TC 2.A.72) family.

It localises to the cell membrane. The catalysed reaction is K(+)(in) + H(+)(in) = K(+)(out) + H(+)(out). Functionally, transport of potassium into the cell. Likely operates as a K(+):H(+) symporter. The chain is Probable potassium transport system protein Kup from Streptococcus pyogenes serotype M5 (strain Manfredo).